The sequence spans 232 residues: MNKAVVVFSGGQDSTTCLVKALNEFDEVHAITFDYGQRHRLEIEVAQNLAKELGVAAHKVMDVTLLNELAISSLTRDDIPVSHELQENGLPNSFVPGRNILFLTLAGIYAYQIGAETIITGVCETDFSGYPDCRDDFVKAMNSALVKGMDKPLVIQTPLMWLNKAETWALADQNNALQLVREKTLTCYNGIVGDGCGDCPSCHLRKVGLNDYLDNREAIMASLVEKQHAESK.

Residue 8 to 18 participates in ATP binding; sequence FSGGQDSTTCL. 4 residues coordinate Zn(2+): C187, C196, C199, and C202.

It belongs to the QueC family. The cofactor is Zn(2+).

It carries out the reaction 7-carboxy-7-deazaguanine + NH4(+) + ATP = 7-cyano-7-deazaguanine + ADP + phosphate + H2O + H(+). It functions in the pathway purine metabolism; 7-cyano-7-deazaguanine biosynthesis. Its function is as follows. Catalyzes the ATP-dependent conversion of 7-carboxy-7-deazaguanine (CDG) to 7-cyano-7-deazaguanine (preQ(0)). This Vibrio vulnificus (strain YJ016) protein is 7-cyano-7-deazaguanine synthase.